A 1012-amino-acid polypeptide reads, in one-letter code: Structural polyprotein (1012 aa).

Aspartate 30 contributes to the a divalent metal cation binding site. The Peptidase S50 domain maps to 513–755 (ADKGYEVVAN…AGRQYDLAMA (243 aa)). Serine 652 (nucleophile) is an active-site residue. Lysine 692 is an active-site residue. The interval 971–1012 (EMKHRNPRRAPPKPKPKPNVPTQRPPGRLGRWIRAVSDEDLE) is disordered. Over residues 975 to 986 (RNPRRAPPKPKP) the composition is skewed to basic residues. An interaction with VP1 protein region spans residues 1003 to 1012 (IRAVSDEDLE).

As to quaternary structure, homotrimer. A central divalent metal stabilizes the VP2 trimer. Interacts with host ITGA4/ITGB1. In terms of assembly, homodimer. Interacts (via C-terminus) with VP1 in the cytoplasm. Interacts with VP2. Post-translationally, specific enzymatic cleavages yield mature proteins. The capsid assembly seems to be regulated by polyprotein processing. The protease VP4 cleaves itself off the polyprotein, thus releasing pre-VP2 and VP3 within the infected cell. During capsid assembly, the C-terminus of pre-VP2 is further processed by VP4, giving rise to VP2, the external capsid protein and three small peptides that all stay closely associated with the capsid.

Its subcellular location is the virion. The protein localises to the host cytoplasm. In terms of biological role, capsid protein VP2 self assembles to form an icosahedral capsid with a T=13 symmetry, about 70 nm in diameter, and consisting of 260 VP2 trimers. The capsid encapsulates the genomic dsRNA. VP2 is also involved in attachment and entry into the host cell by interacting with host ITGA4/ITGB1. The precursor of VP2 plays an important role in capsid assembly. First, pre-VP2 and VP2 oligomers assemble to form a procapsid. Then, the pre-VP2 intermediates may be processed into VP2 proteins by proteolytic cleavage mediated by VP4 to obtain the mature virion. The final capsid is composed of pentamers and hexamers but VP2 has a natural tendency to assemble into all-pentameric structures. Therefore pre-VP2 may be required to allow formation of the hexameric structures. Functionally, protease VP4 is a serine protease that cleaves the polyprotein into its final products. Pre-VP2 is first partially cleaved, and may be completely processed by VP4 upon capsid maturation. Its function is as follows. Capsid protein VP3 plays a key role in virion assembly by providing a scaffold for the capsid made of VP2. May self-assemble to form a T=4-like icosahedral inner-capsid composed of at least 180 trimers. Plays a role in genomic RNA packaging by recruiting VP1 into the capsid and interacting with the dsRNA genome segments to form a ribonucleoprotein complex. Additionally, the interaction of the VP3 C-terminal tail with VP1 removes the inherent structural blockade of the polymerase active site. Thus, VP3 can also function as a transcriptional activator. In terms of biological role, structural peptide 1 is a small peptide derived from pre-VP2 C-terminus. It destabilizes and perforates cell membranes, suggesting a role during entry. Structural peptide 2 is a small peptide derived from pre-VP2 C-terminus. It is not essential for the virus viability, but viral growth is affected when missing. Functionally, structural peptide 3 is a small peptide derived from pre-VP2 C-terminus. It is not essential for the virus viability, but viral growth is affected when missing. The polypeptide is Structural polyprotein (Avian infectious bursal disease virus (isolate Chicken/UK/UK661/1989) (IBDV)).